Reading from the N-terminus, the 308-residue chain is Ribosomal RNA large subunit methyltransferase F (308 aa).

It belongs to the methyltransferase superfamily. METTL16/RlmF family.

The protein localises to the cytoplasm. The enzyme catalyses adenosine(1618) in 23S rRNA + S-adenosyl-L-methionine = N(6)-methyladenosine(1618) in 23S rRNA + S-adenosyl-L-homocysteine + H(+). Specifically methylates the adenine in position 1618 of 23S rRNA. The protein is Ribosomal RNA large subunit methyltransferase F of Escherichia coli (strain SMS-3-5 / SECEC).